A 92-amino-acid polypeptide reads, in one-letter code: MANSAQARKRARQAAKANSHNSALRSKYRTAVKAVRKAIEAGDAAQAAEIFKASAKTLDIIADKKIVHKNKAARHKSRLAAAVKGLQAPAAQ.

The interval 1–25 (MANSAQARKRARQAAKANSHNSALR) is disordered.

The protein belongs to the bacterial ribosomal protein bS20 family.

Binds directly to 16S ribosomal RNA. The chain is Small ribosomal subunit protein bS20 from Paraburkholderia phymatum (strain DSM 17167 / CIP 108236 / LMG 21445 / STM815) (Burkholderia phymatum).